A 326-amino-acid polypeptide reads, in one-letter code: Sulfate/thiosulfate import ATP-binding protein CysA (326 aa).

The ABC transporter domain maps to 3–237; sequence IEVRNVSKNF…PSNDFVYHFL (235 aa). Residue 35–42 coordinates ATP; that stretch reads GPSGCGKT.

Belongs to the ABC transporter superfamily. Sulfate/tungstate importer (TC 3.A.1.6) family. In terms of assembly, the complex is composed of two ATP-binding proteins (CysA), two transmembrane proteins (CysT and CysW) and a solute-binding protein (CysP).

The protein localises to the cell inner membrane. It catalyses the reaction sulfate(out) + ATP + H2O = sulfate(in) + ADP + phosphate + H(+). The enzyme catalyses thiosulfate(out) + ATP + H2O = thiosulfate(in) + ADP + phosphate + H(+). Part of the ABC transporter complex CysAWTP involved in sulfate/thiosulfate import. Responsible for energy coupling to the transport system. The polypeptide is Sulfate/thiosulfate import ATP-binding protein CysA (Pseudomonas syringae pv. tomato (strain ATCC BAA-871 / DC3000)).